The following is a 596-amino-acid chain: Ubiquilin-4 (596 aa).

One can recognise a Ubiquitin-like domain in the interval I13 to K87. Residues K23 and K62 each participate in a glycyl lysine isopeptide (Lys-Gly) (interchain with G-Cter in SUMO2) cross-link. A disordered region spans residues Q89–S148. 2 stretches are compositionally biased toward low complexity: residues T93–P119 and S139–S148. The residue at position 139 (S139) is a Phosphoserine. 2 STI1 domains span residues N187–M224 and E225–M256. At T282 the chain carries Phosphothreonine. A disordered region spans residues G297–F361. The span at S302 to S313 shows a compositional bias: low complexity. Residue S313 is modified to Phosphoserine. Residues L324–S335 are compositionally biased toward pro residues. A compositionally biased stretch (gly residues) spans G339–G349. The segment covering Q352–F361 has biased composition (polar residues). 2 consecutive STI1 domains span residues N388 to L435 and L439 to L471. The disordered stretch occupies residues V482 to Q528. Positions G499 to P513 are enriched in polar residues. In terms of domain architecture, UBA spans P548 to S593.

In terms of assembly, homooligomer. Binds signal sequences of proteins that are targeted to the endoplasmic reticulum. Interacts (via UBA domain) with GJA1 (not ubiquitinated) and with ubiquitin; both compete for the same binding site. Interacts (via UBA domain) with ubiquitin and with polyubiquitin chains. Interacts (via ubiquitin-like domain) with PSMD2 and PSMD4, regulatory subunits of the 26S proteasome. Interacts with ATXN1/SCA1; interaction with ATXN1 inhibits polyubiquitination of UBQLN4 and interferes with PSMD4 binding. Interacts with HERPUD1. Interacts (via ubiquitin-like domain) with UBQLN1 (via UBA domain). Interacts with UBQLN2. Interacts (via STI1 1 and 2 domains) with MAP1LC3A/B/C. Interacts with BAG6. Interacts with MRE11 (when ubiquitinated); interaction with ubiquitinated MRE11 leads to MRE11 removal from chromatin. Interacts with DESI1/POST; leading to nuclear export. Interacts with BCL2A1 and BCL2L10. Phosphorylated by ATM at Ser-313 in response to DNA damage, leading to localization in the nucleus and recruitment to sites of DNA damage. In terms of processing, ubiquitinated; this does not lead to proteasomal degradation. May undergo both 'Lys-48'- and 'Lys-63'-linked polyubiquitination. Detected in testis, ovary, thyroid, kidney, thymus, heart, liver, lung and spleen (at protein level). Highly expressed in heart, skeletal muscle, kidney, liver and brain. Detected at lower levels in testis, lung and spleen.

Its subcellular location is the nucleus. It localises to the cytoplasm. It is found in the chromosome. The protein localises to the endoplasmic reticulum. The protein resides in the perinuclear region. Its subcellular location is the cytoplasmic vesicle. It localises to the autophagosome. Its function is as follows. Regulator of protein degradation that mediates the proteasomal targeting of misfolded, mislocalized or accumulated proteins. Acts by binding polyubiquitin chains of target proteins via its UBA domain and by interacting with subunits of the proteasome via its ubiquitin-like domain. Key regulator of DNA repair that represses homologous recombination repair: in response to DNA damage, recruited to sites of DNA damage following phosphorylation by ATM and acts by binding and removing ubiquitinated MRE11 from damaged chromatin, leading to MRE11 degradation by the proteasome. MRE11 degradation prevents homologous recombination repair, redirecting double-strand break repair toward non-homologous end joining (NHEJ). Specifically recognizes and binds mislocalized transmembrane-containing proteins and targets them to proteasomal degradation. Collaborates with DESI1/POST in the export of ubiquitinated proteins from the nucleus to the cytoplasm. Plays a role in the regulation of the proteasomal degradation of non-ubiquitinated GJA1. Acts as an adapter protein that recruits UBQLN1 to the autophagy machinery. Mediates the association of UBQLN1 with autophagosomes and the autophagy-related protein LC3 (MAP1LC3A/B/C) and may assist in the maturation of autophagosomes to autolysosomes by mediating autophagosome-lysosome fusion. The protein is Ubiquilin-4 of Mus musculus (Mouse).